An 860-amino-acid chain; its full sequence is Leucine--tRNA ligase (860 aa).

Positions 42–52 (PYPSGRLHMGH) match the 'HIGH' region motif. A 'KMSKS' region motif is present at residues 619–623 (KMSKS). Lysine 622 contacts ATP.

The protein belongs to the class-I aminoacyl-tRNA synthetase family.

The protein localises to the cytoplasm. The enzyme catalyses tRNA(Leu) + L-leucine + ATP = L-leucyl-tRNA(Leu) + AMP + diphosphate. The chain is Leucine--tRNA ligase from Edwardsiella ictaluri (strain 93-146).